We begin with the raw amino-acid sequence, 252 residues long: Deoxyuridine 5'-triphosphate nucleotidohydrolase, mitochondrial (252 aa).

Residues 1 to 69 (MTPLCPRPAL…AGRLSQGCRG (69 aa)) constitute a mitochondrion transit peptide. Cysteine 11, serine 88, and serine 99 each carry phosphoserine. The tract at residues 78–104 (WKGELPKAGGSPAPGPETPAISPSKRA) is disordered. Residues 173–175 (RSG), 187–193 (GVIDEDY), glycine 198, arginine 241, and 246–247 (FG) contribute to the dUTP site.

This sequence belongs to the dUTPase family. Homotrimer. The cofactor is Mg(2+). Nuclear isoform 2 is phosphorylated in vivo on Ser-11, a reaction that can be catalyzed in vitro by CDC2. Phosphorylation in mature T-cells occurs in a cell cycle-dependent manner. Isoform 3 is not phosphorylated. In terms of tissue distribution, found in a variety of tissues. Isoform 3 expression is constitutive, while isoform 2 expression correlates with the onset of DNA replication (at protein level). Isoform 2 degradation coincides with the cessation of nuclear DNA replication (at protein level).

It localises to the nucleus. Its subcellular location is the mitochondrion. It catalyses the reaction dUTP + H2O = dUMP + diphosphate + H(+). It functions in the pathway pyrimidine metabolism; dUMP biosynthesis; dUMP from dCTP (dUTP route): step 2/2. Its activity is regulated as follows. Phosphorylation is necessary for activity. In terms of biological role, catalyzes the cleavage of 2'-deoxyuridine 5'-triphosphate (dUTP) into 2'-deoxyuridine 5'-monophosphate (dUMP) and inorganic pyrophosphate and through its action efficiently prevents uracil misincorporation into DNA and at the same time provides dUMP, the substrate for de novo thymidylate biosynthesis. Inhibits peroxisome proliferator-activated receptor (PPAR) activity by binding of its N-terminal to PPAR, preventing the latter's dimerization with retinoid X receptor. Essential for embryonic development. This is Deoxyuridine 5'-triphosphate nucleotidohydrolase, mitochondrial (DUT) from Homo sapiens (Human).